A 116-amino-acid chain; its full sequence is Iron-sulfur cluster insertion protein ErpA (116 aa).

Iron-sulfur cluster is bound by residues Cys-44, Cys-108, and Cys-110.

Belongs to the HesB/IscA family. Homodimer. Iron-sulfur cluster serves as cofactor.

Functionally, required for insertion of 4Fe-4S clusters for at least IspG. In Shewanella loihica (strain ATCC BAA-1088 / PV-4), this protein is Iron-sulfur cluster insertion protein ErpA.